A 206-amino-acid chain; its full sequence is Small ribosomal subunit protein uS4 (206 aa).

The S4 RNA-binding domain occupies 96–156 (GRLDNVVYRM…EKAKKQSRVK (61 aa)).

It belongs to the universal ribosomal protein uS4 family. Part of the 30S ribosomal subunit. Contacts protein S5. The interaction surface between S4 and S5 is involved in control of translational fidelity.

In terms of biological role, one of the primary rRNA binding proteins, it binds directly to 16S rRNA where it nucleates assembly of the body of the 30S subunit. With S5 and S12 plays an important role in translational accuracy. The protein is Small ribosomal subunit protein uS4 of Erwinia tasmaniensis (strain DSM 17950 / CFBP 7177 / CIP 109463 / NCPPB 4357 / Et1/99).